The chain runs to 298 residues: MQKNQTIFLNTWKFLITLHQKPWSTFFTKIPDFPHVLLKDIAKVGVGLVSGFDEAFLLNEDDISKLNEDEKQLIKNFVKAKNCKRFVVEGFVQYILIEDNLKDEEIFKTKYPNIYKKLLKFKDRMENRYLPKNKKWFNWQALRNYKFLIKNLNKKRIYVPTLDRKPYNRFSLGDDELLPSGDVIFIQPYNDDDIYFLLGYLNSSFFRNYYLANGGRRGGRVAFTQKLLENAKIPTFSDEVKEKIKNIVKDIIYNLKNGKDIENLERQIDYIIVSAINNNQFKGYQTTLKNLLKPKLKG.

It carries out the reaction a 2'-deoxyadenosine in DNA + S-adenosyl-L-methionine = an N(6)-methyl-2'-deoxyadenosine in DNA + S-adenosyl-L-homocysteine + H(+). Its function is as follows. A methylase that recognizes the double-stranded sequence 5'-GTNNAC-3', methylates A-5 on both strands, and protects the DNA from cleavage by the MjaIV endonuclease. This Methanocaldococcus jannaschii (strain ATCC 43067 / DSM 2661 / JAL-1 / JCM 10045 / NBRC 100440) (Methanococcus jannaschii) protein is Type II methyltransferase M.MjaIV (mjaIVMP).